The following is a 367-amino-acid chain: Protein-glutamate methylesterase/protein-glutamine glutaminase 2 (367 aa).

Residues Arg-15 to Glu-132 form the Response regulatory domain. Asp-66 bears the 4-aspartylphosphate mark. Residues Lys-172–Arg-367 form the CheB-type methylesterase domain. Active-site residues include Ser-184, His-211, and Asp-311.

This sequence belongs to the CheB family. Post-translationally, phosphorylated by CheA. Phosphorylation of the N-terminal regulatory domain activates the methylesterase activity.

It is found in the cytoplasm. The catalysed reaction is [protein]-L-glutamate 5-O-methyl ester + H2O = L-glutamyl-[protein] + methanol + H(+). It catalyses the reaction L-glutaminyl-[protein] + H2O = L-glutamyl-[protein] + NH4(+). In terms of biological role, involved in chemotaxis. Part of a chemotaxis signal transduction system that modulates chemotaxis in response to various stimuli. Catalyzes the demethylation of specific methylglutamate residues introduced into the chemoreceptors (methyl-accepting chemotaxis proteins or MCP) by CheR. Also mediates the irreversible deamidation of specific glutamine residues to glutamic acid. The sequence is that of Protein-glutamate methylesterase/protein-glutamine glutaminase 2 from Methanosarcina mazei (strain ATCC BAA-159 / DSM 3647 / Goe1 / Go1 / JCM 11833 / OCM 88) (Methanosarcina frisia).